Consider the following 153-residue polypeptide: Superoxide dismutase [Cu-Zn] (153 aa).

His-45, His-47, and His-62 together coordinate Cu cation. Cys-56 and Cys-145 are joined by a disulfide. Residues His-62, His-70, His-79, and Asp-82 each contribute to the Zn(2+) site. His-119 contacts Cu cation.

This sequence belongs to the Cu-Zn superoxide dismutase family. In terms of assembly, homodimer. Cu cation is required as a cofactor. Requires Zn(2+) as cofactor.

It localises to the cytoplasm. The catalysed reaction is 2 superoxide + 2 H(+) = H2O2 + O2. Its function is as follows. Destroys radicals which are normally produced within the cells and which are toxic to biological systems. The protein is Superoxide dismutase [Cu-Zn] of Ceratitis capitata (Mediterranean fruit fly).